Here is a 152-residue protein sequence, read N- to C-terminus: UPF0266 membrane protein plu2700 (152 aa).

A run of 3 helical transmembrane segments spans residues 6–26 (IALT…EFVV), 45–65 (IDAL…ITVY), and 67–87 (SRLT…IAYI).

Belongs to the UPF0266 family.

The protein resides in the cell inner membrane. The protein is UPF0266 membrane protein plu2700 of Photorhabdus laumondii subsp. laumondii (strain DSM 15139 / CIP 105565 / TT01) (Photorhabdus luminescens subsp. laumondii).